Here is a 196-residue protein sequence, read N- to C-terminus: MKRIEEKEKAIMDEIMEMHALAEKAVELSFRAMRGDKSVVREISRIEQQTDVLDTDINYACTTFIALFQPVARDLRFAISIMRISSSYERIADIAQEISLYESKLPEIVFKAEKYLKKMFDAVKEGYTKTEGLKERMTELDNAVDEIYVEAIEQLEESCDVNAVLTVRHIERIGDLLAKIAARQIFIKEGRRVWII.

This sequence belongs to the PhoU family. In terms of assembly, homodimer.

The protein localises to the cytoplasm. Plays a role in the regulation of phosphate uptake. This is Phosphate-specific transport system accessory protein PhoU homolog from Archaeoglobus fulgidus (strain ATCC 49558 / DSM 4304 / JCM 9628 / NBRC 100126 / VC-16).